Reading from the N-terminus, the 138-residue chain is Protein SPMIP3 (138 aa).

This chain is Protein SPMIP3 (SPMIP3), found in Bos taurus (Bovine).